Consider the following 292-residue polypeptide: N-acetylneuraminate lyase (292 aa).

The aceneuramate site is built by S47 and T48. Y136 functions as the Proton donor in the catalytic mechanism. K164 (schiff-base intermediate with substrate) is an active-site residue. The aceneuramate site is built by T166, G188, D190, E191, and S207.

This sequence belongs to the DapA family. NanA subfamily. As to quaternary structure, homotetramer.

It is found in the cytoplasm. The catalysed reaction is aceneuramate = aldehydo-N-acetyl-D-mannosamine + pyruvate. Its pathway is amino-sugar metabolism; N-acetylneuraminate degradation; D-fructose 6-phosphate from N-acetylneuraminate: step 1/5. Catalyzes the reversible aldol cleavage of N-acetylneuraminic acid (sialic acid; Neu5Ac) to form pyruvate and N-acetylmannosamine (ManNAc) via a Schiff base intermediate. The polypeptide is N-acetylneuraminate lyase (Histophilus somni (strain 129Pt) (Haemophilus somnus)).